Here is a 181-residue protein sequence, read N- to C-terminus: Large ribosomal subunit protein uL6 (181 aa).

The protein belongs to the universal ribosomal protein uL6 family. As to quaternary structure, part of the 50S ribosomal subunit.

In terms of biological role, this protein binds to the 23S rRNA, and is important in its secondary structure. It is located near the subunit interface in the base of the L7/L12 stalk, and near the tRNA binding site of the peptidyltransferase center. In Desulforudis audaxviator (strain MP104C), this protein is Large ribosomal subunit protein uL6.